An 880-amino-acid chain; its full sequence is MITANEIRHRFLEFFRKNGHEVVDSSSLVPNDDPTLLFTNAGMVQFKKIFLGQEKRAYSRATTSQKCLRVGGKHNDLENVGRTARHHTFFEMLGNFSFGDYFKEDAIRFAWSFITEELKLPKEKLYITIYRDDDEAEKLWQSVAGVPSERIYRLGEKDNFWSMGDTGPCGPCSEIHIDQGADMACGPDCGIGKCDCDRFLEIWNLVFMQYDQAPDGTRTPLPNPCIDTGMGLERIAAVCQNVRSNFDCDLFQAFINYTAELAGVSYRKDSEDTDTALRVIADHSRAIAFMIADGILPSNEGRGYVLRRLIRRAYRFGRLIGLEGSYLYKTALKVVEEMGGAFPELLENKDFMARVVREEEERFNKTLDKGLLLLEDELSALTARNSTCVAGDVAFKLYDTFGFPLDIVNDIAEKRGFSVDEDGFKKLMQEQKSRAKAAWKGGGEQTLAARFQALLEEGIASEFVGYDHLSAESRIIALLGEDMESVEALPAGAAGYLVSTRTPFYGESGGQLGDTGDAVSETGSAEVTDTLKPSAKLLVHVVKVSQGELLRDQAVTLTVREGQRFASARNHTCTHILHAALRKVLGDHVKQAGSLVGPERLRFDFTHISAMTPEEILAVENEVNRVILSDIALNSEHMAYDDAVQKGAMALFGEKYESEVRVVSIPGESVELCGGTHLRATGQAGSFYITSESGVAAGVRRIEAVTGWDAVRLFMQQRAELHEVAGLVKGKPGDIAGRVKTLQKEVRTLKKDMEKLAAQAASGKGRNLMDSVEEVNGVKLLAASLPGANVKALREVMDDVRSKLTSGVACLVAVDGDKVHMLIAVSKDLHDRFTAPALIKDVAARIGGSGGGRPDMAQAGGTDPQGVEDAFACLRQIMGA.

Residues H571, H575, C673, and H677 each contribute to the Zn(2+) site.

Belongs to the class-II aminoacyl-tRNA synthetase family. Zn(2+) serves as cofactor.

It localises to the cytoplasm. The enzyme catalyses tRNA(Ala) + L-alanine + ATP = L-alanyl-tRNA(Ala) + AMP + diphosphate. Its function is as follows. Catalyzes the attachment of alanine to tRNA(Ala) in a two-step reaction: alanine is first activated by ATP to form Ala-AMP and then transferred to the acceptor end of tRNA(Ala). Also edits incorrectly charged Ser-tRNA(Ala) and Gly-tRNA(Ala) via its editing domain. The chain is Alanine--tRNA ligase from Oleidesulfovibrio alaskensis (strain ATCC BAA-1058 / DSM 17464 / G20) (Desulfovibrio alaskensis).